A 323-amino-acid chain; its full sequence is Porphobilinogen deaminase (323 aa).

S-(dipyrrolylmethanemethyl)cysteine is present on C251.

It belongs to the HMBS family. As to quaternary structure, monomer. The cofactor is dipyrromethane.

The catalysed reaction is 4 porphobilinogen + H2O = hydroxymethylbilane + 4 NH4(+). Its pathway is porphyrin-containing compound metabolism; protoporphyrin-IX biosynthesis; coproporphyrinogen-III from 5-aminolevulinate: step 2/4. It participates in porphyrin-containing compound metabolism; chlorophyll biosynthesis. Functionally, tetrapolymerization of the monopyrrole PBG into the hydroxymethylbilane pre-uroporphyrinogen in several discrete steps. This chain is Porphobilinogen deaminase (hemC), found in Nostoc sp. (strain PCC 7120 / SAG 25.82 / UTEX 2576).